Consider the following 394-residue polypeptide: Cell division protein FtsZ (394 aa).

GTP is bound by residues 21–25, 108–110, glutamate 139, arginine 143, and aspartate 187; these read GGGGN and GTG.

Belongs to the FtsZ family. Homodimer. Polymerizes to form a dynamic ring structure in a strictly GTP-dependent manner. Interacts directly with several other division proteins. Interacts with the SulA inhibitor.

Its subcellular location is the cytoplasm. Its function is as follows. Essential cell division protein that forms a contractile ring structure (Z ring) at the future cell division site. The regulation of the ring assembly controls the timing and the location of cell division. One of the functions of the FtsZ ring is to recruit other cell division proteins to the septum to produce a new cell wall between the dividing cells. Binds GTP and shows GTPase activity. In Pseudomonas aeruginosa (strain ATCC 15692 / DSM 22644 / CIP 104116 / JCM 14847 / LMG 12228 / 1C / PRS 101 / PAO1), this protein is Cell division protein FtsZ.